We begin with the raw amino-acid sequence, 299 residues long: MKIGSHVSLSGKKMLLGASEEAASYGATTMMVYTGAPQNTRRKPISDLRIPEALLHMEENGIEEIVVHAPYIINLGNTTKPETFELAVSFLGEEIRRAEALEKAKHIVLHPGAHVGAGEEVGIKRIIEGLNEVLTGDEKVKIALETMAGKGSEIGKTFEEIAAIIAGVTHNDRLSVCLDTCHVHDAGYDLIHDLDGVLESFDRIVGINRLGVIHVNDSKNIRGAKKDRHENIGFGEIGFDPLHRIVHHRDLAHLPKILETPYIGLDPRKKVAPYREEIAMLRSGNFDAEWRLPLIGTSI.

H68, H110, E145, D179, H182, H214, D227, H229, and E259 together coordinate Zn(2+).

This sequence belongs to the AP endonuclease 2 family. Zn(2+) is required as a cofactor.

The enzyme catalyses Endonucleolytic cleavage to 5'-phosphooligonucleotide end-products.. In terms of biological role, endonuclease IV plays a role in DNA repair. It cleaves phosphodiester bonds at apurinic or apyrimidinic (AP) sites, generating a 3'-hydroxyl group and a 5'-terminal sugar phosphate. The protein is Probable endonuclease 4 of Exiguobacterium sibiricum (strain DSM 17290 / CCUG 55495 / CIP 109462 / JCM 13490 / 255-15).